The chain runs to 507 residues: Dihydrolipoyllysine-residue acetyltransferase component of pyruvate dehydrogenase complex, mitochondrial (507 aa).

The Lipoyl-binding domain maps to 77–153 (HNRVALPALS…PIGKLLCIIV (77 aa)). K118 bears the N6-lipoyllysine mark. Disordered stretches follow at residues 168 to 223 (DGAS…VSAS) and 248 to 270 (RILA…TQAV). The 38-residue stretch at 221 to 258 (SASPFAKKLAAENGLDLSGVSGSGPGGRILASDLSQAP) folds into the Peripheral subunit-binding (PSBD) domain. Residues H480 and D484 contribute to the active site.

This sequence belongs to the 2-oxoacid dehydrogenase family. It depends on (R)-lipoate as a cofactor.

The protein localises to the mitochondrion matrix. It carries out the reaction N(6)-[(R)-dihydrolipoyl]-L-lysyl-[protein] + acetyl-CoA = N(6)-[(R)-S(8)-acetyldihydrolipoyl]-L-lysyl-[protein] + CoA. The pyruvate dehydrogenase complex catalyzes the overall conversion of pyruvate to acetyl-CoA and CO(2). It contains multiple copies of three enzymatic components: pyruvate dehydrogenase (E1), dihydrolipoamide acetyltransferase (E2) and lipoamide dehydrogenase (E3). This Caenorhabditis elegans protein is Dihydrolipoyllysine-residue acetyltransferase component of pyruvate dehydrogenase complex, mitochondrial.